We begin with the raw amino-acid sequence, 456 residues long: Arginine biosynthesis bifunctional protein ArgJ, mitochondrial (456 aa).

Residues threonine 184, lysine 213, threonine 224, glutamate 311, asparagine 451, and threonine 456 each coordinate substrate. Threonine 224 acts as the Nucleophile in catalysis.

It belongs to the ArgJ family. As to quaternary structure, heterodimer of an alpha and a beta chain. Post-translationally, the alpha and beta chains are autoproteolytically processed from a single precursor protein within the mitochondrion.

It is found in the mitochondrion matrix. The enzyme catalyses N(2)-acetyl-L-ornithine + L-glutamate = N-acetyl-L-glutamate + L-ornithine. It carries out the reaction L-glutamate + acetyl-CoA = N-acetyl-L-glutamate + CoA + H(+). Its pathway is amino-acid biosynthesis; L-arginine biosynthesis; L-ornithine and N-acetyl-L-glutamate from L-glutamate and N(2)-acetyl-L-ornithine (cyclic): step 1/1. The protein operates within amino-acid biosynthesis; L-arginine biosynthesis; N(2)-acetyl-L-ornithine from L-glutamate: step 1/4. Catalyzes two activities which are involved in the cyclic version of arginine biosynthesis: the synthesis of acetylglutamate from glutamate and acetyl-CoA, and of ornithine by transacetylation between acetylornithine and glutamate. The sequence is that of Arginine biosynthesis bifunctional protein ArgJ, mitochondrial from Neosartorya fischeri (strain ATCC 1020 / DSM 3700 / CBS 544.65 / FGSC A1164 / JCM 1740 / NRRL 181 / WB 181) (Aspergillus fischerianus).